Here is a 346-residue protein sequence, read N- to C-terminus: ATP-dependent (S)-NAD(P)H-hydrate dehydratase 2 (346 aa).

Residues 1-20 form a disordered region; it reads MMVHSPLATGPHPTTHLEPT. In terms of domain architecture, YjeF C-terminal spans 28–339; that stretch reads LLRKAFQMIP…GYIGEAFEQV (312 aa). Residues glycine 135 and 188 to 194 contribute to the (6S)-NADPHX site; that span reads NHVEFQR. ATP contacts are provided by residues 228–232 and 248–257; these read KGSID and GSPKRCGGQG. Aspartate 258 contributes to the (6S)-NADPHX binding site.

The protein belongs to the NnrD/CARKD family. It depends on Mg(2+) as a cofactor.

It is found in the cytoplasm. It catalyses the reaction (6S)-NADHX + ATP = ADP + phosphate + NADH + H(+). The catalysed reaction is (6S)-NADPHX + ATP = ADP + phosphate + NADPH + H(+). Catalyzes the dehydration of the S-form of NAD(P)HX at the expense of ATP, which is converted to ADP. Together with NAD(P)HX epimerase, which catalyzes the epimerization of the S- and R-forms, the enzyme allows the repair of both epimers of NAD(P)HX, a damaged form of NAD(P)H that is a result of enzymatic or heat-dependent hydration. The chain is ATP-dependent (S)-NAD(P)H-hydrate dehydratase 2 from Puccinia graminis f. sp. tritici (strain CRL 75-36-700-3 / race SCCL) (Black stem rust fungus).